The primary structure comprises 375 residues: Chaperone protein DnaJ (375 aa).

One can recognise a J domain in the interval 4 to 68; the sequence is DYYETLGVDR…ETRARYDQFG (65 aa). A CR-type zinc finger spans residues 134–216; that stretch reads GGEKEIRIPH…CGGAGRKQET (83 aa). Zn(2+) is bound by residues C147, C150, C164, C167, C190, C193, C204, and C207. 4 CXXCXGXG motif repeats span residues 147–154, 164–171, 190–197, and 204–211; these read CQVCNGSG, CSTCNGAG, CPDCNGAG, and CDACGGAG.

It belongs to the DnaJ family. In terms of assembly, homodimer. Requires Zn(2+) as cofactor.

The protein localises to the cytoplasm. Its function is as follows. Participates actively in the response to hyperosmotic and heat shock by preventing the aggregation of stress-denatured proteins and by disaggregating proteins, also in an autonomous, DnaK-independent fashion. Unfolded proteins bind initially to DnaJ; upon interaction with the DnaJ-bound protein, DnaK hydrolyzes its bound ATP, resulting in the formation of a stable complex. GrpE releases ADP from DnaK; ATP binding to DnaK triggers the release of the substrate protein, thus completing the reaction cycle. Several rounds of ATP-dependent interactions between DnaJ, DnaK and GrpE are required for fully efficient folding. Also involved, together with DnaK and GrpE, in the DNA replication of plasmids through activation of initiation proteins. This is Chaperone protein DnaJ from Rippkaea orientalis (strain PCC 8801 / RF-1) (Cyanothece sp. (strain PCC 8801)).